Here is a 594-residue protein sequence, read N- to C-terminus: Zinc finger protein 703 (594 aa).

The segment covering 1–14 (MSDSPAGSNPRTPE) has biased composition (polar residues). Disordered regions lie at residues 1 to 37 (MSDS…VPAV), 100 to 298 (TCSQ…GHVA), and 345 to 370 (LVGG…LTGA). Residue S2 is modified to N-acetylserine. Residues 17–30 (GSGGGSSSGGGGGK) are compositionally biased toward gly residues. Low complexity-rich tracts occupy residues 134-145 (RSAPGAASAAAA), 177-191 (GSSS…SSSS), and 212-225 (GASV…SSPG). Residues 246-256 (ELDKKEQEAKP) are compositionally biased toward basic and acidic residues. S257 bears the Phosphoserine mark. Residues 345 to 356 (LVGGQLSGGLGL) show a composition bias toward gly residues. The segment at 460 to 488 (HSCNWVAASGPCDKRFATSEELLSHLRTH) adopts a C2H2-type zinc-finger fold. At R584 the chain carries Omega-N-methylarginine.

It belongs to the Elbow/Noc family. In terms of assembly, interacts with DCAF7 and PHB2. Interacts with TLE4; increases transcriptional repression. Expressed in mammary epithelium.

The protein localises to the nucleus. It is found in the cytoplasm. In terms of biological role, transcriptional corepressor which does not bind directly to DNA and may regulate transcription through recruitment of histone deacetylases to gene promoters. Regulates cell adhesion, migration and proliferation. May be required for segmental gene expression during hindbrain development. The polypeptide is Zinc finger protein 703 (Znf703) (Mus musculus (Mouse)).